The following is a 252-amino-acid chain: Small ribosomal subunit protein uS2 (252 aa).

Position 2 is an N-acetylserine (Ser-2). Low complexity predominate over residues 213–222 (QVAEETAGAA). Residues 213 to 252 (QVAEETAGAATEEEEAKEEVTEEQTEATEWAEETTEAVAW) form a disordered region. Positions 223 to 252 (TEEEEAKEEVTEEQTEATEWAEETTEAVAW) are enriched in acidic residues.

It belongs to the universal ribosomal protein uS2 family. In terms of assembly, component of the small ribosomal subunit. Mature ribosomes consist of a small (40S) and a large (60S) subunit. The 40S subunit contains about 33 different proteins and 1 molecule of RNA (18S). The 60S subunit contains about 49 different proteins and 3 molecules of RNA (25S, 5.8S and 5S). Interacts with RPS21.

Its subcellular location is the cytoplasm. In terms of biological role, required for the assembly and/or stability of the 40S ribosomal subunit. Required for the processing of the 20S rRNA-precursor to mature 18S rRNA in a late step of the maturation of 40S ribosomal subunits. The polypeptide is Small ribosomal subunit protein uS2 (Zygosaccharomyces rouxii (strain ATCC 2623 / CBS 732 / NBRC 1130 / NCYC 568 / NRRL Y-229)).